Consider the following 618-residue polypeptide: Dihydroxy-acid dehydratase (618 aa).

D81 lines the Mg(2+) pocket. Residue C122 participates in [2Fe-2S] cluster binding. Mg(2+) is bound by residues D123 and K124. K124 carries the N6-carboxylysine modification. Residue C195 participates in [2Fe-2S] cluster binding. E491 lines the Mg(2+) pocket. S517 (proton acceptor) is an active-site residue.

This sequence belongs to the IlvD/Edd family. In terms of assembly, homodimer. It depends on [2Fe-2S] cluster as a cofactor. The cofactor is Mg(2+).

The enzyme catalyses (2R)-2,3-dihydroxy-3-methylbutanoate = 3-methyl-2-oxobutanoate + H2O. The catalysed reaction is (2R,3R)-2,3-dihydroxy-3-methylpentanoate = (S)-3-methyl-2-oxopentanoate + H2O. The protein operates within amino-acid biosynthesis; L-isoleucine biosynthesis; L-isoleucine from 2-oxobutanoate: step 3/4. It participates in amino-acid biosynthesis; L-valine biosynthesis; L-valine from pyruvate: step 3/4. Functionally, functions in the biosynthesis of branched-chain amino acids. Catalyzes the dehydration of (2R,3R)-2,3-dihydroxy-3-methylpentanoate (2,3-dihydroxy-3-methylvalerate) into 2-oxo-3-methylpentanoate (2-oxo-3-methylvalerate) and of (2R)-2,3-dihydroxy-3-methylbutanoate (2,3-dihydroxyisovalerate) into 2-oxo-3-methylbutanoate (2-oxoisovalerate), the penultimate precursor to L-isoleucine and L-valine, respectively. This chain is Dihydroxy-acid dehydratase, found in Dechloromonas aromatica (strain RCB).